The primary structure comprises 295 residues: Ribosomal protein L11 methyltransferase (295 aa).

The S-adenosyl-L-methionine site is built by T145, G166, D188, and N230.

Belongs to the methyltransferase superfamily. PrmA family.

The protein resides in the cytoplasm. The enzyme catalyses L-lysyl-[protein] + 3 S-adenosyl-L-methionine = N(6),N(6),N(6)-trimethyl-L-lysyl-[protein] + 3 S-adenosyl-L-homocysteine + 3 H(+). Functionally, methylates ribosomal protein L11. The sequence is that of Ribosomal protein L11 methyltransferase from Shewanella amazonensis (strain ATCC BAA-1098 / SB2B).